The sequence spans 398 residues: Rhizopuspepsin-4 (398 aa).

Residues 1-21 (MKFTLISSCVALACMALAVEA) form the signal peptide. Residues 22-74 (APSGKKINVPLSKNANYKPNAKRAIEKANAKYARFRSSSSSSSSSSCGSAGTE) constitute a propeptide, activation peptide. A compositionally biased stretch (low complexity) spans 58 to 78 (SSSSSSSSSSCGSAGTESSGS). Residues 58–83 (SSSSSSSSSSCGSAGTESSGSVPVTD) form a disordered region. The region spanning 90 to 394 (YYGEVTVGTP…NPQVPQVQIA (305 aa)) is the Peptidase A1 domain. The active site involves Asp-108. Cys-121 and Cys-124 are oxidised to a cystine. The active site involves Asp-291. A disulfide bond links Cys-325 and Cys-358.

Belongs to the peptidase A1 family.

It carries out the reaction Hydrolysis of proteins with broad specificity similar to that of pepsin A, preferring hydrophobic residues at P1 and P1'. Clots milk and activates trypsinogen. Does not cleave 4-Gln-|-His-5, but does cleave 10-His-|-Leu-11 and 12-Val-|-Glu-13 in B chain of insulin.. This Rhizopus niveus protein is Rhizopuspepsin-4.